The chain runs to 199 residues: Putative AgrB-like protein (199 aa).

The next 5 helical transmembrane spans lie at I43 to I63, Y81 to F101, F108 to N128, L139 to L159, and I165 to I185.

This sequence belongs to the AgrB family.

It is found in the cell membrane. Functionally, may be involved in the proteolytic processing of a quorum sensing system signal molecule precursor. The protein is Putative AgrB-like protein (cfg02) of Clostridium beijerinckii (Clostridium MP).